Consider the following 1629-residue polypeptide: MNFKILPIAIDLGVKNTGVFSAFYQKGTSLERLDNKNGKVYELSKDSYTLLMNNRTARRHQRRGIDRKQLVKRLFKLIWTEQLNLEWDKDTQQAISFLFNRRGFSFITDGYSPEYLNIVPEQVKAILMDIFDDYNGEDDLDSYLKLATEQESKISEIYNKLMQKILEFKLMKLCTDIKDDKVSTKTLKEITSYEFELLADYLANYSESLKTQKFSYTDKQGNLKELSYYHHDKYNIQEFLKRHATINDRILDTLLTDDLDIWNFNFEKFDFDKNEEKLQNQEDKDHIQAHLHHFVFAVNKIKSEMASGGRHRSQYFQEITNVLDENNHQEGYLKNFCENLHNKKYSNLSVKNLVNLIGNLSNLELKPLRKYFNDKIHAKADHWDEQKFTETYCHWILGEWRVGVKDQDKKDGAKYSYKDLCNELKQKVTKAGLVDFLLELDPCRTIPPYLDNNNRKPPKCQSLILNPKFLDNQYPNWQQYLQELKKLQSIQNYLDSFETDLKVLKSSKDQPYFVEYKSSNQQIASGQRDYKDLDARILQFIFDRVKASDELLLNEIYFQAKKLKQKASSELEKLESSKKLDEVIANSQLSQILKSQHTNGIFEQGTFLHLVCKYYKQRQRARDSRLYIMPEYRYDKKLHKYNNTGRFDDDNQLLTYCNHKPRQKRYQLLNDLAGVLQVSPNFLKDKIGSDDDLFISKWLVEHIRGFKKACEDSLKIQKDNRGLLNHKINIARNTKGKCEKEIFNLICKIEGSEDKKGNYKHGLAYELGVLLFGEPNEASKPEFDRKIKKFNSIYSFAQIQQIAFAERKGNANTCAVCSADNAHRMQQIKITEPVEDNKDKIILSAKAQRLPAIPTRIVDGAVKKMATILAKNIVDDNWQNIKQVLSAKHQLHIPIITESNAFEFEPALADVKGKSLKDRRKKALERISPENIFKDKNNRIKEFAKGISAYSGANLTDGDFDGAKEELDHIIPRSHKKYGTLNDEANLICVTRGDNKNKGNRIFCLRDLADNYKLKQFETTDDLEIEKKIADTIWDANKKDFKFGNYRSFINLTPQEQKAFRHALFLADENPIKQAVIRAINNRNRTFVNGTQRYFAEVLANNIYLRAKKENLNTDKISFDYFGIPTIGNGRGIAEIRQLYEKVDSDIQAYAKGDKPQASYSHLIDAMLAFCIAADEHRNDGSIGLEIDKNYSLYPLDKNTGEVFTKDIFSQIKITDNEFSDKKLVRKKAIEGFNTHRQMTRDGIYAENYLPILIHKELNEVRKGYTWKNSEEIKIFKGKKYDIQQLNNLVYCLKFVDKPISIDIQISTLEELRNILTTNNIAATAEYYYINLKTQKLHEYYIENYNTALGYKKYSKEMEFLRSLAYRSERVKIKSIDDVKQVLDKDSNFIIGKITLPFKKEWQRLYREWQNTTIKDDYEFLKSFFNVKSITKLHKKVRKDFSLPISTNEGKFLVKRKTWDNNFIYQILNDSDSRADGTKPFIPAFDISKNEIVEAIIDSFTSKNIFWLPKNIELQKVDNKNIFAIDTSKWFEVETPSDLRDIGIATIQYKIDNNSRPKVRVKLDYVIDDDSKINYFMNHSLLKSRYPDKVLEILKQSTIIEFESSGFNKTIKEMLGMKLAGIYNETSNN.

Positions 1–51 are ruvC-I; it reads MNFKILPIAIDLGVKNTGVFSAFYQKGTSLERLDNKNGKVYELSKDSYTLL. D11 (for RuvC-like nuclease domain) is an active-site residue. Residue D11 participates in Mn(2+) binding. The interval 55 to 73 is ARM; the sequence is RTARRHQRRGIDRKQLVKR. Positions 83 to 858 are recognition domain (REC); it reads LNLEWDKDTQ…RLPAIPTRIV (776 aa). C460 is a binding site for Zn(2+). Residues 555 to 582 are a coiled coil; sequence EIYFQAKKLKQKASSELEKLESSKKLDE. Zn(2+)-binding residues include C657, C814, and C817. The ruvC-II stretch occupies residues 858–899; it reads VDGAVKKMATILAKNIVDDNWQNIKQVLSAKHQLHIPIITES. Positions 876 and 880 each coordinate Mg(2+). The HNH Cas9-type domain occupies 897 to 1046; sequence TESNAFEFEP…NKKDFKFGNY (150 aa). Residue N995 is the Proton acceptor for HNH nuclease domain of the active site. Residues 1088–1224 are ruvC-III; the sequence is VNGTQRYFAE…TDNEFSDKKL (137 aa). Position 1162 (H1162) interacts with Mn(2+). A PAM-binding motif is present at residues 1473-1474; it reads SR. Residues 1476-1629 are PAM-interacting domain (PI); sequence DGTKPFIPAF…AGIYNETSNN (154 aa). Positions 1556 and 1585 each coordinate RNA.

The protein belongs to the CRISPR-associated protein Cas9 family. Subtype II-B subfamily. In terms of assembly, monomer. Binds crRNA and tracrRNA. It depends on Mg(2+) as a cofactor. Zn(2+) is required as a cofactor.

In terms of biological role, CRISPR (clustered regularly interspaced short palindromic repeat) is an adaptive immune system that provides protection against mobile genetic elements (viruses, transposable elements and conjugative plasmids). CRISPR clusters contain spacers, sequences complementary to antecedent mobile elements, and target invading nucleic acids. CRISPR clusters are transcribed and processed into CRISPR RNA (crRNA). In type II CRISPR systems correct processing of pre-crRNA requires a trans-encoded small RNA (tracrRNA), endogenous ribonuclease 3 (rnc) and this protein. The tracrRNA serves as a guide for ribonuclease 3-aided processing of pre-crRNA. Subsequently Cas9/crRNA/tracrRNA endonucleolytically cleaves linear or circular dsDNA target complementary to the spacer; Cas9 is inactive in the absence of the 2 guide RNAs (gRNA). Cas9 recognizes a short motif in the CRISPR repeat sequences (the PAM or protospacer adjacent motif) to help distinguish self versus nonself, as targets within the bacterial CRISPR locus do not have PAMs. PAM recognition is also required for catalytic activity. Cuts target DNA when Cas9 and gRNAs are mixed. Its function is as follows. Plays a role in repression of expression of endogenous bacterial lipoprotein FTN_1103. Cas9 plays a possibly non-enzymatic role in the degradation of FTN_1103 mRNA, which is dependent on formation of an RNA:RNA complex of tracrRNA and scaRNA (the latter is not found in all type II CRISPR-Cas systems). In Francisella tularensis subsp. novicida (strain U112), this protein is CRISPR-associated endonuclease Cas9 (cas9).